Consider the following 118-residue polypeptide: uncharacterized protein (118 aa).

This is an uncharacterized protein from Bacillus subtilis (strain 168).